A 377-amino-acid chain; its full sequence is Chaperone protein DnaJ (377 aa).

The region spanning 5 to 70 is the J domain; it reads DYYQVLGVAK…QKRAAYDQYG (66 aa). The CR-type zinc finger occupies 137 to 215; that stretch reads GYDTQIRVPS…CHGAGKTKET (79 aa). The Zn(2+) site is built by Cys-150, Cys-153, Cys-167, Cys-170, Cys-189, Cys-192, Cys-203, and Cys-206. 4 CXXCXGXG motif repeats span residues 150–157, 167–174, 189–196, and 203–210; these read CEICHGSG, CPTCNGSG, CPKCHGTG, and CTHCHGAG.

It belongs to the DnaJ family. Homodimer. Zn(2+) is required as a cofactor.

Its subcellular location is the cytoplasm. In terms of biological role, participates actively in the response to hyperosmotic and heat shock by preventing the aggregation of stress-denatured proteins and by disaggregating proteins, also in an autonomous, DnaK-independent fashion. Unfolded proteins bind initially to DnaJ; upon interaction with the DnaJ-bound protein, DnaK hydrolyzes its bound ATP, resulting in the formation of a stable complex. GrpE releases ADP from DnaK; ATP binding to DnaK triggers the release of the substrate protein, thus completing the reaction cycle. Several rounds of ATP-dependent interactions between DnaJ, DnaK and GrpE are required for fully efficient folding. Also involved, together with DnaK and GrpE, in the DNA replication of plasmids through activation of initiation proteins. The chain is Chaperone protein DnaJ from Paraburkholderia phymatum (strain DSM 17167 / CIP 108236 / LMG 21445 / STM815) (Burkholderia phymatum).